Here is a 277-residue protein sequence, read N- to C-terminus: Protein OPG166 (277 aa).

N-linked (GlcNAc...) asparagine; by host glycans are attached at residues Asn29 and Asn58. A run of 5 helical transmembrane segments spans residues 124-144 (TMLM…EIAY), 156-176 (GILQ…AFLF), 186-206 (IIGL…KVFS), 219-239 (LIIY…GLSL), and 247-267 (LLLS…LFLV).

This sequence belongs to the orthopoxvirus OPG166 protein family.

The protein localises to the host membrane. Its function is as follows. Promotes, when overexpressed, the influx of extracellular Ca(2+), leading to membrane permeability and host cell necrosis. The protein is Protein OPG166 (OPG166) of Cynomys gunnisoni (Gunnison's prairie dog).